Here is a 245-residue protein sequence, read N- to C-terminus: Aliphatic sulfonates import ATP-binding protein SsuB 1 (245 aa).

In terms of domain architecture, ABC transporter spans 8–223 (VSITGLRKSF…ERADPDILRY (216 aa)). 40 to 47 (GPSGTGKT) provides a ligand contact to ATP.

Belongs to the ABC transporter superfamily. Aliphatic sulfonates importer (TC 3.A.1.17.2) family. In terms of assembly, the complex is composed of two ATP-binding proteins (SsuB), two transmembrane proteins (SsuC) and a solute-binding protein (SsuA).

The protein resides in the cell membrane. The enzyme catalyses ATP + H2O + aliphatic sulfonate-[sulfonate-binding protein]Side 1 = ADP + phosphate + aliphatic sulfonateSide 2 + [sulfonate-binding protein]Side 1.. Its function is as follows. Part of the ABC transporter complex SsuABC involved in aliphatic sulfonates import. Responsible for energy coupling to the transport system. In Nocardia farcinica (strain IFM 10152), this protein is Aliphatic sulfonates import ATP-binding protein SsuB 1.